A 258-amino-acid chain; its full sequence is 4-oxalmesaconate hydratase (258 aa).

Zn(2+) is bound by residues H28, D31, and H141.

It belongs to the MshB deacetylase family. Requires Zn(2+) as cofactor.

The enzyme catalyses 2-hydroxy-4-oxobutane-1,2,4-tricarboxylate = 4-carboxy-2-hydroxy-cis,cis-muconate + H2O. Catalyzes the conversion of oxalomesaconic acid enol (OMAenol) to 4-carboxy-4-hydroxy-2-oxoadipic acid (CHA). Mediates the third step of gallate degradation pathway. This Pseudomonas putida (strain ATCC 47054 / DSM 6125 / CFBP 8728 / NCIMB 11950 / KT2440) protein is 4-oxalmesaconate hydratase (galB).